A 320-amino-acid chain; its full sequence is Acetyl-coenzyme A carboxylase carboxyl transferase subunit alpha (320 aa).

The CoA carboxyltransferase C-terminal domain occupies 34 to 288 (RLEEALEAAR…GEALERVLAG (255 aa)).

The protein belongs to the AccA family. As to quaternary structure, acetyl-CoA carboxylase is a heterohexamer composed of biotin carboxyl carrier protein (AccB), biotin carboxylase (AccC) and two subunits each of ACCase subunit alpha (AccA) and ACCase subunit beta (AccD).

Its subcellular location is the cytoplasm. The enzyme catalyses N(6)-carboxybiotinyl-L-lysyl-[protein] + acetyl-CoA = N(6)-biotinyl-L-lysyl-[protein] + malonyl-CoA. Its pathway is lipid metabolism; malonyl-CoA biosynthesis; malonyl-CoA from acetyl-CoA: step 1/1. Component of the acetyl coenzyme A carboxylase (ACC) complex. First, biotin carboxylase catalyzes the carboxylation of biotin on its carrier protein (BCCP) and then the CO(2) group is transferred by the carboxyltransferase to acetyl-CoA to form malonyl-CoA. This is Acetyl-coenzyme A carboxylase carboxyl transferase subunit alpha from Rubrobacter xylanophilus (strain DSM 9941 / JCM 11954 / NBRC 16129 / PRD-1).